Consider the following 298-residue polypeptide: Lipoyl synthase (298 aa).

Positions 40, 45, 51, 67, 71, 74, and 280 each coordinate [4Fe-4S] cluster. The 217-residue stretch at 53 to 269 (AVRRTATFMI…KEIAMQKGFS (217 aa)) folds into the Radical SAM core domain.

It belongs to the radical SAM superfamily. Lipoyl synthase family. [4Fe-4S] cluster serves as cofactor.

The protein resides in the cytoplasm. It catalyses the reaction [[Fe-S] cluster scaffold protein carrying a second [4Fe-4S](2+) cluster] + N(6)-octanoyl-L-lysyl-[protein] + 2 oxidized [2Fe-2S]-[ferredoxin] + 2 S-adenosyl-L-methionine + 4 H(+) = [[Fe-S] cluster scaffold protein] + N(6)-[(R)-dihydrolipoyl]-L-lysyl-[protein] + 4 Fe(3+) + 2 hydrogen sulfide + 2 5'-deoxyadenosine + 2 L-methionine + 2 reduced [2Fe-2S]-[ferredoxin]. It functions in the pathway protein modification; protein lipoylation via endogenous pathway; protein N(6)-(lipoyl)lysine from octanoyl-[acyl-carrier-protein]. In terms of biological role, catalyzes the radical-mediated insertion of two sulfur atoms into the C-6 and C-8 positions of the octanoyl moiety bound to the lipoyl domains of lipoate-dependent enzymes, thereby converting the octanoylated domains into lipoylated derivatives. This chain is Lipoyl synthase, found in Bacillus subtilis (strain 168).